The following is a 270-amino-acid chain: Phosphate import ATP-binding protein PstB 1 (270 aa).

One can recognise an ABC transporter domain in the interval 24 to 265; the sequence is LAVERLNLFY…PYQRQTEDYI (242 aa). An ATP-binding site is contributed by 56-63; sequence GPSGCGKS.

The protein belongs to the ABC transporter superfamily. Phosphate importer (TC 3.A.1.7) family. In terms of assembly, the complex is composed of two ATP-binding proteins (PstB), two transmembrane proteins (PstC and PstA) and a solute-binding protein (PstS).

The protein resides in the cell inner membrane. It catalyses the reaction phosphate(out) + ATP + H2O = ADP + 2 phosphate(in) + H(+). Its function is as follows. Part of the ABC transporter complex PstSACB involved in phosphate import. Responsible for energy coupling to the transport system. This Yersinia pestis bv. Antiqua (strain Antiqua) protein is Phosphate import ATP-binding protein PstB 1.